The sequence spans 352 residues: C-C chemokine receptor type 5 (352 aa).

At Met1–Ala30 the chain is on the extracellular side. Position 3 is a sulfotyrosine (Tyr3). O-linked (GalNAc...) serine glycosylation is found at Ser6 and Ser7. A sulfotyrosine mark is found at Tyr10, Tyr14, and Tyr15. Intrachain disulfides connect Cys20–Cys269 and Cys101–Cys178. The chain crosses the membrane as a helical span at residues Arg31–Cys58. Topologically, residues Lys59–Tyr68 are cytoplasmic. A helical membrane pass occupies residues Leu69–Tyr89. Residues Ala90–Gln102 are Extracellular-facing. The chain crosses the membrane as a helical span at residues Leu103–Ile124. Over Asp125 to Thr141 the chain is Cytoplasmic. A helical membrane pass occupies residues Val142–Phe166. Over Thr167–Ile198 the chain is Extracellular. A helical membrane pass occupies residues Val199–Leu218. The Cytoplasmic portion of the chain corresponds to Lys219 to Arg235. The helical transmembrane segment at Leu236–Phe260 threads the bilayer. The Extracellular segment spans residues Gln261–Gln277. A helical transmembrane segment spans residues Ala278–Gly301. Topologically, residues Glu302–Leu352 are cytoplasmic. 3 S-palmitoyl cysteine lipidation sites follow: Cys321, Cys323, and Cys324. Phosphoserine; by BARK1 occurs at positions 336, 337, and 342.

This sequence belongs to the G-protein coupled receptor 1 family. Interacts with PRAF2. Efficient ligand binding to CCL3/MIP-1alpha and CCL4/MIP-1beta requires sulfation, O-glycosylation and sialic acid modifications. Glycosylation on Ser-6 is required for efficient binding of CCL4. Interacts with GRK2. Interacts with ARRB1 and ARRB2. Interacts with CNIH4. Interacts with S100A4; this interaction stimulates T-lymphocyte chemotaxis. Post-translationally, sulfated on at least 2 of the N-terminal tyrosines. Sulfation is required for efficient binding of the chemokines, CCL3 and CCL4. Palmitoylation in the C-terminal is important for cell surface expression. In terms of processing, phosphorylation on serine residues in the C-terminal is stimulated by binding CC chemokines especially by APO-RANTES. Post-translationally, O-glycosylated, but not N-glycosylated. Ser-6 appears to be the major site even if Ser-7 may be also O-glycosylated. Also sialylated glycans present which contribute to chemokine binding. Thr-16 and Ser-17 may also be glycosylated and, if so, with small moieties such as a T-antigen.

It localises to the cell membrane. Its function is as follows. Receptor for a number of inflammatory CC-chemokines including CCL3/MIP-1-alpha, CCL4/MIP-1-beta and RANTES and subsequently transduces a signal by increasing the intracellular calcium ion level. May play a role in the control of granulocytic lineage proliferation or differentiation. Participates in T-lymphocyte migration to the infection site by acting as a chemotactic receptor. This chain is C-C chemokine receptor type 5 (CCR5), found in Allochrocebus solatus (Sun-tailed monkey).